The following is a 358-amino-acid chain: Homoserine O-succinyltransferase (358 aa).

Catalysis depends on cysteine 146, which acts as the Acyl-thioester intermediate. Residues lysine 167 and serine 196 each coordinate substrate. The active-site Proton acceptor is histidine 239. Glutamate 241 is a catalytic residue. Residue arginine 253 participates in substrate binding.

Belongs to the MetA family.

It localises to the cytoplasm. It carries out the reaction L-homoserine + succinyl-CoA = O-succinyl-L-homoserine + CoA. It functions in the pathway amino-acid biosynthesis; L-methionine biosynthesis via de novo pathway; O-succinyl-L-homoserine from L-homoserine: step 1/1. In terms of biological role, transfers a succinyl group from succinyl-CoA to L-homoserine, forming succinyl-L-homoserine. This chain is Homoserine O-succinyltransferase, found in Nitrosococcus oceani (strain ATCC 19707 / BCRC 17464 / JCM 30415 / NCIMB 11848 / C-107).